Here is a 296-residue protein sequence, read N- to C-terminus: Homoserine kinase (296 aa).

Residue 86-96 coordinates ATP; it reads KAGSGLGSSAA.

It belongs to the GHMP kinase family. Homoserine kinase subfamily.

The protein localises to the cytoplasm. The catalysed reaction is L-homoserine + ATP = O-phospho-L-homoserine + ADP + H(+). Its pathway is amino-acid biosynthesis; L-threonine biosynthesis; L-threonine from L-aspartate: step 4/5. Catalyzes the ATP-dependent phosphorylation of L-homoserine to L-homoserine phosphate. This is Homoserine kinase (thrB) from Methanocaldococcus jannaschii (strain ATCC 43067 / DSM 2661 / JAL-1 / JCM 10045 / NBRC 100440) (Methanococcus jannaschii).